The sequence spans 371 residues: Chaperone protein DnaJ (371 aa).

One can recognise a J domain in the interval 5 to 69 (DYYEVLGLSK…QKRAQYDQFG (65 aa)). The CR-type zinc-finger motif lies at 133–215 (GKELNVEIPV…CHGSGKVRKR (83 aa)). Zn(2+) is bound by residues cysteine 146, cysteine 149, cysteine 163, cysteine 166, cysteine 189, cysteine 192, cysteine 203, and cysteine 206. 4 CXXCXGXG motif repeats span residues 146–153 (CDTCKGSG), 163–170 (CKHCSGSG), 189–196 (CSHCSGTG), and 203–210 (CTTCHGSG).

It belongs to the DnaJ family. Homodimer. Zn(2+) is required as a cofactor.

The protein resides in the cytoplasm. Functionally, participates actively in the response to hyperosmotic and heat shock by preventing the aggregation of stress-denatured proteins and by disaggregating proteins, also in an autonomous, DnaK-independent fashion. Unfolded proteins bind initially to DnaJ; upon interaction with the DnaJ-bound protein, DnaK hydrolyzes its bound ATP, resulting in the formation of a stable complex. GrpE releases ADP from DnaK; ATP binding to DnaK triggers the release of the substrate protein, thus completing the reaction cycle. Several rounds of ATP-dependent interactions between DnaJ, DnaK and GrpE are required for fully efficient folding. Also involved, together with DnaK and GrpE, in the DNA replication of plasmids through activation of initiation proteins. The chain is Chaperone protein DnaJ from Bacillus cereus (strain AH820).